A 337-amino-acid polypeptide reads, in one-letter code: Biotin synthase (337 aa).

In terms of domain architecture, Radical SAM core spans 58–283; sequence EDVEVEGIVS…RTVLRYAGGR (226 aa). Residues Cys73, Cys77, and Cys80 each contribute to the [4Fe-4S] cluster site. [2Fe-2S] cluster contacts are provided by Cys116, Cys149, Cys208, and Arg278.

Belongs to the radical SAM superfamily. Biotin synthase family. As to quaternary structure, homodimer. Requires [4Fe-4S] cluster as cofactor. The cofactor is [2Fe-2S] cluster.

The catalysed reaction is (4R,5S)-dethiobiotin + (sulfur carrier)-SH + 2 reduced [2Fe-2S]-[ferredoxin] + 2 S-adenosyl-L-methionine = (sulfur carrier)-H + biotin + 2 5'-deoxyadenosine + 2 L-methionine + 2 oxidized [2Fe-2S]-[ferredoxin]. The protein operates within cofactor biosynthesis; biotin biosynthesis; biotin from 7,8-diaminononanoate: step 2/2. In terms of biological role, catalyzes the conversion of dethiobiotin (DTB) to biotin by the insertion of a sulfur atom into dethiobiotin via a radical-based mechanism. This chain is Biotin synthase, found in Pseudarthrobacter chlorophenolicus (strain ATCC 700700 / DSM 12829 / CIP 107037 / JCM 12360 / KCTC 9906 / NCIMB 13794 / A6) (Arthrobacter chlorophenolicus).